The primary structure comprises 223 residues: Neurotrophic factor BDNF precursor form (223 aa).

The N-terminal stretch at 1-5 (SCMKA) is a signal peptide. The propeptide occupies 6 to 114 (APMKEVSIRG…AANMSMRVRR (109 aa)). An N-linked (GlcNAc...) asparagine glycan is attached at Asn-107. 2 disulfide bridges follow: Cys-127/Cys-194 and Cys-172/Cys-223.

It belongs to the NGF-beta family.

Its subcellular location is the secreted. Functionally, promotes the survival of neuronal populations that are all located either in the central nervous system or directly connected to it. The chain is Neurotrophic factor BDNF precursor form (BDNF) from Exiliboa placata (Oaxacan dwarf boa).